Consider the following 161-residue polypeptide: GTP-dependent dephospho-CoA kinase (161 aa).

GTP contacts are provided by D40, V41, V42, D59, E112, and E135.

The protein belongs to the GTP-dependent DPCK family.

The catalysed reaction is 3'-dephospho-CoA + GTP = GDP + CoA + H(+). It participates in cofactor biosynthesis; coenzyme A biosynthesis. In terms of biological role, catalyzes the GTP-dependent phosphorylation of the 3'-hydroxyl group of dephosphocoenzyme A to form coenzyme A (CoA). The polypeptide is GTP-dependent dephospho-CoA kinase (Methanocorpusculum labreanum (strain ATCC 43576 / DSM 4855 / Z)).